The primary structure comprises 385 residues: Tetraacyldisaccharide 4'-kinase (385 aa).

Residue 60–67 participates in ATP binding; that stretch reads TVGGSGKT.

This sequence belongs to the LpxK family.

It catalyses the reaction a lipid A disaccharide + ATP = a lipid IVA + ADP + H(+). The protein operates within glycolipid biosynthesis; lipid IV(A) biosynthesis; lipid IV(A) from (3R)-3-hydroxytetradecanoyl-[acyl-carrier-protein] and UDP-N-acetyl-alpha-D-glucosamine: step 6/6. Transfers the gamma-phosphate of ATP to the 4'-position of a tetraacyldisaccharide 1-phosphate intermediate (termed DS-1-P) to form tetraacyldisaccharide 1,4'-bis-phosphate (lipid IVA). This Psychrobacter arcticus (strain DSM 17307 / VKM B-2377 / 273-4) protein is Tetraacyldisaccharide 4'-kinase.